A 383-amino-acid polypeptide reads, in one-letter code: tRNA(Met) cytidine acetate ligase (383 aa).

ATP contacts are provided by residues 7 to 20 (IAEFNPLHSGHEFL), Gly-101, Asn-153, and 178 to 179 (RI).

This sequence belongs to the TmcAL family.

It is found in the cytoplasm. It catalyses the reaction cytidine(34) in elongator tRNA(Met) + acetate + ATP = N(4)-acetylcytidine(34) in elongator tRNA(Met) + AMP + diphosphate. In terms of biological role, catalyzes the formation of N(4)-acetylcytidine (ac(4)C) at the wobble position of elongator tRNA(Met), using acetate and ATP as substrates. First activates an acetate ion to form acetyladenylate (Ac-AMP) and then transfers the acetyl group to tRNA to form ac(4)C34. The protein is tRNA(Met) cytidine acetate ligase of Lactobacillus acidophilus (strain ATCC 700396 / NCK56 / N2 / NCFM).